A 311-amino-acid chain; its full sequence is Transcription factor bHLH145 (311 aa).

A bHLH domain is found at phenylalanine 253–leucine 302.

In terms of assembly, homodimer.

It is found in the nucleus. This is Transcription factor bHLH145 (BHLH145) from Arabidopsis thaliana (Mouse-ear cress).